The primary structure comprises 655 residues: NACHT, LRR and PYD domains-containing protein 10 (655 aa).

The region spanning 1-96 (MAMAKARKPR…VDQLSHICLH (96 aa)) is the Pyrin domain. The NACHT domain maps to 167-484 (SLVVLQGSAG…AMSYLVKEDQ (318 aa)). An ATP-binding site is contributed by 173–180 (GSAGTGKT). Residues 597–609 (QSQNLFSVKSSLS) show a composition bias toward polar residues. The tract at residues 597–655 (QSQNLFSVKSSLSHGPKEEQKCPSVHGQKEGKDNIAGTQKEASTGKGRGTEETPKNTYI) is disordered. Basic and acidic residues-rich tracts occupy residues 611 to 629 (GPKE…EGKD) and 644 to 655 (RGTEETPKNTYI).

The protein belongs to the NLRP family. As to quaternary structure, oligomerizes. Interacts with PYCARD. Also interacts with CASP1 and IL1B. Interacts with NOD1 and components of the NOD1 signaling pathway including RIPK2, NR2C2/TAK1 and IKBKG/NEMO. In terms of tissue distribution, highly expressed in basal and suprabasal epidermal cell layers with lower levels in dermal fibroblast cells (at protein level). Widely expressed with highest levels in heart, brain and skeletal muscle. Also expressed in liver, colon, dermis and epidermis. Little expression detected in myeloid cells or peripheral blood mononuclear cells.

It localises to the cytoplasm. It is found in the cell membrane. Functionally, inhibits autoprocessing of CASP1, CASP1-dependent IL1B secretion, PYCARD aggregation and PYCARD-mediated apoptosis but not apoptosis induced by FAS or BID. Displays anti-inflammatory activity. Required for immunity against C.albicans infection. Involved in the innate immune response by contributing to pro-inflammatory cytokine release in response to invasive bacterial infection. Contributes to T-cell-mediated inflammatory responses in the skin. Plays a role in protection against periodontitis through its involvement in induction of IL1A via ERK activation in oral epithelial cells infected with periodontal pathogens. Exhibits both ATPase and GTPase activities. The sequence is that of NACHT, LRR and PYD domains-containing protein 10 (NLRP10) from Homo sapiens (Human).